The primary structure comprises 417 residues: NADH-quinone oxidoreductase subunit D (417 aa).

The protein belongs to the complex I 49 kDa subunit family. NDH-1 is composed of 14 different subunits. Subunits NuoB, C, D, E, F, and G constitute the peripheral sector of the complex.

It localises to the cell inner membrane. It catalyses the reaction a quinone + NADH + 5 H(+)(in) = a quinol + NAD(+) + 4 H(+)(out). Its function is as follows. NDH-1 shuttles electrons from NADH, via FMN and iron-sulfur (Fe-S) centers, to quinones in the respiratory chain. The immediate electron acceptor for the enzyme in this species is believed to be ubiquinone. Couples the redox reaction to proton translocation (for every two electrons transferred, four hydrogen ions are translocated across the cytoplasmic membrane), and thus conserves the redox energy in a proton gradient. This chain is NADH-quinone oxidoreductase subunit D, found in Cupriavidus metallidurans (strain ATCC 43123 / DSM 2839 / NBRC 102507 / CH34) (Ralstonia metallidurans).